An 82-amino-acid polypeptide reads, in one-letter code: Sulfur carrier protein TusA (82 aa).

C19 (cysteine persulfide intermediate) is an active-site residue.

It belongs to the sulfur carrier protein TusA family.

Its subcellular location is the cytoplasm. Its function is as follows. Sulfur carrier protein which probably makes part of a sulfur-relay system. This is Sulfur carrier protein TusA from Tolumonas auensis (strain DSM 9187 / NBRC 110442 / TA 4).